The chain runs to 186 residues: Ribosome-recycling factor (186 aa).

This sequence belongs to the RRF family.

The protein resides in the cytoplasm. Functionally, responsible for the release of ribosomes from messenger RNA at the termination of protein biosynthesis. May increase the efficiency of translation by recycling ribosomes from one round of translation to another. In Acidovorax ebreus (strain TPSY) (Diaphorobacter sp. (strain TPSY)), this protein is Ribosome-recycling factor.